The primary structure comprises 326 residues: Ribonuclease H2 subunit A (326 aa).

The interval 1–47 (MKDDHDAWEPEELVSDNNSSENELQEDQNSSITFLPPSVNKSNPAKS) is disordered. Polar residues predominate over residues 15–47 (SDNNSSENELQEDQNSSITFLPPSVNKSNPAKS). The RNase H type-2 domain maps to 63-286 (PYRLGVDEAG…AKDLLELPSK (224 aa)). Positions 69, 70, and 180 each coordinate a divalent metal cation.

Belongs to the RNase HII family. Eukaryotic subfamily. The cofactor is Mn(2+). Mg(2+) serves as cofactor.

It carries out the reaction Endonucleolytic cleavage to 5'-phosphomonoester.. Functionally, endonuclease that specifically degrades the RNA of RNA-DNA hybrids. Participates in DNA replication. The polypeptide is Ribonuclease H2 subunit A (rnh201) (Schizosaccharomyces pombe (strain 972 / ATCC 24843) (Fission yeast)).